A 797-amino-acid polypeptide reads, in one-letter code: Ribosome biogenesis protein BOP1 homolog (797 aa).

2 disordered regions span residues 22–112 and 149–177; these read LVPS…GGGP and SICA…RNTV. Residues 61–73 show a composition bias toward low complexity; the sequence is AGAAAAAVEGTAA. The span at 74 to 87 shows a compositional bias: acidic residues; it reads PEDEAADNSSEEDA. Over residues 90–112 the composition is skewed to gly residues; the sequence is GSHGEGAGEGGGSGTWPGNGGGP. WD repeat units lie at residues 462 to 502, 504 to 544, 581 to 623, 626 to 664, 667 to 706, 710 to 749, and 766 to 797; these read GHMG…CWRT, VLEG…EEAE, RLRF…SQNP, KNRG…LAKK, GGGG…KPYK, YHSA…DLLT, and TASE…LYCN.

The protein belongs to the WD repeat BOP1/ERB1 family.

The protein resides in the nucleus. Its subcellular location is the nucleolus. The protein localises to the nucleoplasm. Required for maturation of ribosomal RNAs and formation of the large ribosomal subunit. This is Ribosome biogenesis protein BOP1 homolog from Chlamydomonas reinhardtii (Chlamydomonas smithii).